Consider the following 108-residue polypeptide: FK506-binding protein 1 (108 aa).

In terms of domain architecture, PPIase FKBP-type spans 20–108; it reads GDSVTIHYVG…KFEVELLKIN (89 aa).

It belongs to the FKBP-type PPIase family. FKBP1 subfamily.

The protein localises to the cytoplasm. The catalysed reaction is [protein]-peptidylproline (omega=180) = [protein]-peptidylproline (omega=0). Its activity is regulated as follows. Inhibited by both FK506 and rapamycin. In terms of biological role, PPIases accelerate the folding of proteins. It catalyzes the cis-trans isomerization of proline imidic peptide bonds in oligopeptides. The protein is FK506-binding protein 1 (FPR1) of Cryptococcus neoformans var. neoformans serotype D (strain JEC21 / ATCC MYA-565) (Filobasidiella neoformans).